The following is a 324-amino-acid chain: Fructose-1,6-bisphosphatase class 1 (324 aa).

Positions 88, 107, 109, and 110 each coordinate Mg(2+). Residues 110-113 (DGSS), N199, and K265 contribute to the substrate site. Position 271 (E271) interacts with Mg(2+).

This sequence belongs to the FBPase class 1 family. Homotetramer. It depends on Mg(2+) as a cofactor.

It is found in the cytoplasm. The enzyme catalyses beta-D-fructose 1,6-bisphosphate + H2O = beta-D-fructose 6-phosphate + phosphate. It functions in the pathway carbohydrate biosynthesis; gluconeogenesis. The polypeptide is Fructose-1,6-bisphosphatase class 1 (Neisseria meningitidis serogroup A / serotype 4A (strain DSM 15465 / Z2491)).